Here is a 309-residue protein sequence, read N- to C-terminus: Probable manganese-dependent inorganic pyrophosphatase (309 aa).

6 residues coordinate Mn(2+): histidine 9, aspartate 13, aspartate 15, aspartate 75, histidine 97, and aspartate 149.

It belongs to the PPase class C family. It depends on Mn(2+) as a cofactor.

The protein resides in the cytoplasm. It carries out the reaction diphosphate + H2O = 2 phosphate + H(+). The polypeptide is Probable manganese-dependent inorganic pyrophosphatase (Bacillus velezensis (strain DSM 23117 / BGSC 10A6 / LMG 26770 / FZB42) (Bacillus amyloliquefaciens subsp. plantarum)).